Reading from the N-terminus, the 369-residue chain is CASP-like protein 4U1 (369 aa).

Positions 1–162 are disordered; the sequence is MASTPRTPAP…RAETKLPLSS (162 aa). The Cytoplasmic segment spans residues 1–222; sequence MASTPRTPAP…AVAAVAERRE (222 aa). Residues 7-23 show a composition bias toward pro residues; the sequence is TPAPERSPPPVPTPPPP. Positions 36 to 51 are enriched in basic and acidic residues; that stretch reads SPREEASFSSDGREGA. Low complexity-rich tracts occupy residues 87 to 96 and 114 to 127; these read ANKAAAATAE and SSQT…SPTP. A helical membrane pass occupies residues 223–243; the sequence is LLLALRLATAVLSLAAFSVIA. At 244 to 262 the chain is on the extracellular side; sequence SARTSGWAGDYYARHLQYR. A helical transmembrane segment spans residues 263–283; it reads YAVAVNVIVFAYSVAQSLGKI. At 284-300 the chain is on the cytoplasmic side; sequence RHLVSPRFTFRTMSSYY. Residues 301–321 form a helical membrane-spanning segment; that stretch reads CSLFLDQVLAYLLMSASSAAA. Topologically, residues 322-339 are extracellular; the sequence is SRNDLWVSRFGTDAFVRK. The chain crosses the membrane as a helical span at residues 340 to 360; the sequence is ITGALWLSFVAFLVLALNAVI. Over 361 to 369 the chain is Cytoplasmic; it reads SXANLFSMV.

Belongs to the Casparian strip membrane proteins (CASP) family. In terms of assembly, homodimer and heterodimers.

The protein localises to the cell membrane. In Zea mays (Maize), this protein is CASP-like protein 4U1.